The following is a 412-amino-acid chain: Thyroxine-binding globulin (412 aa).

The first 16 residues, methionine 1–cysteine 16, serve as a signal peptide directing secretion. Asparagine 35, asparagine 98, asparagine 164, and asparagine 252 each carry an N-linked (GlcNAc...) asparagine glycan. The thyroxine site is built by asparagine 292 and lysine 395.

The protein belongs to the serpin family. In terms of tissue distribution, expressed by the liver and secreted in plasma.

The protein resides in the secreted. In terms of biological role, major thyroid hormone transport protein in serum. The sequence is that of Thyroxine-binding globulin (SERPINA7) from Ovis aries (Sheep).